The sequence spans 250 residues: Ribosomal RNA-processing protein 15 (250 aa).

Residues 1–27 (MGSKHRVDTKDKKRTRKNAEFGREKRN) show a composition bias toward basic and acidic residues. Positions 1–101 (MGSKHRVDTK…NSKHDDGSTG (101 aa)) are disordered. Acidic residues-rich tracts occupy residues 43–53 (MEGDEAEEDEQ) and 67–83 (EQSDAEEDDDEEEEDDD). S69 is subject to Phosphoserine.

This sequence belongs to the RRP15 family.

The protein resides in the nucleus. The protein localises to the nucleolus. Functionally, constituent of pre-60S ribosomal particles. Required for large subunit rRNA maturation, in particular processing of the 27S pre-rRNA at the A3 and B1 sites to yield 5.8S and 25S rRNA. In Saccharomyces cerevisiae (strain ATCC 204508 / S288c) (Baker's yeast), this protein is Ribosomal RNA-processing protein 15.